The primary structure comprises 507 residues: Phosphoenolpyruvate carboxylase (507 aa).

Residues 1–25 form a disordered region; that stretch reads MHKIDRKIPNIMGTQHPDNAGVPFF.

This sequence belongs to the PEPCase type 2 family. Homotetramer. Mg(2+) serves as cofactor.

The enzyme catalyses oxaloacetate + phosphate = phosphoenolpyruvate + hydrogencarbonate. Catalyzes the irreversible beta-carboxylation of phosphoenolpyruvate (PEP) to form oxaloacetate (OAA), a four-carbon dicarboxylic acid source for the tricarboxylic acid cycle. In Oenococcus oeni (strain ATCC BAA-331 / PSU-1), this protein is Phosphoenolpyruvate carboxylase.